We begin with the raw amino-acid sequence, 372 residues long: Protein-glutamate methylesterase/protein-glutamine glutaminase 1 (372 aa).

Positions 4-121 constitute a Response regulatory domain; it reads KVLVVDDSSF…ATNKDDAILL (118 aa). A 4-aspartylphosphate modification is found at Asp55. Positions 138-174 are disordered; sequence VVRPTTPTPPPRSSASSVLGGVSTHTQPAPVRSSHAA. In terms of domain architecture, CheB-type methylesterase spans 179–372; that stretch reads SGKQYKLLLI…ESILKESARG (194 aa). Catalysis depends on residues Ser191, His218, and Asp314.

This sequence belongs to the CheB family. In terms of processing, phosphorylated by CheA. Phosphorylation of the N-terminal regulatory domain activates the methylesterase activity.

Its subcellular location is the cytoplasm. The catalysed reaction is [protein]-L-glutamate 5-O-methyl ester + H2O = L-glutamyl-[protein] + methanol + H(+). It carries out the reaction L-glutaminyl-[protein] + H2O = L-glutamyl-[protein] + NH4(+). Functionally, involved in chemotaxis. Part of a chemotaxis signal transduction system that modulates chemotaxis in response to various stimuli. Catalyzes the demethylation of specific methylglutamate residues introduced into the chemoreceptors (methyl-accepting chemotaxis proteins or MCP) by CheR. Also mediates the irreversible deamidation of specific glutamine residues to glutamic acid. In Shewanella sp. (strain MR-4), this protein is Protein-glutamate methylesterase/protein-glutamine glutaminase 1.